The primary structure comprises 340 residues: Chorismate mutase 1, chloroplastic (340 aa).

The N-terminal 65 residues, 1-65, are a transit peptide targeting the chloroplast; the sequence is MEASLLMRSS…KPRSGTSSVH (65 aa). Position 66 is an N-acetylalanine (alanine 66). An L-phenylalanine-binding site is contributed by arginine 79. Residues 79 to 340 form the Chorismate mutase domain; that stretch reads RVDESESLTL…QVEYLLRRLD (262 aa). Residues arginine 150 and 211–214 each bind L-tyrosine; that span reads NYGS. L-phenylalanine is bound at residue 211–214; sequence NYGS.

In terms of assembly, homodimer. Expressed in roots, shoots, rosette leaves, stems, cauline leaves, flowers and siliques.

The protein localises to the plastid. The protein resides in the chloroplast. The catalysed reaction is chorismate = prephenate. The protein operates within metabolic intermediate biosynthesis; prephenate biosynthesis; prephenate from chorismate: step 1/1. With respect to regulation, allosterically inhibited by tyrosine and phenylalanine. Activated by tryptophan. Functionally, may play a role in chloroplast biogenesis. The chain is Chorismate mutase 1, chloroplastic from Arabidopsis thaliana (Mouse-ear cress).